The following is a 176-amino-acid chain: Dynein light chain Tctex-type 5-B (176 aa).

The protein belongs to the dynein light chain Tctex-type family.

The sequence is that of Dynein light chain Tctex-type 5-B (Dynlt5-b) from Xenopus laevis (African clawed frog).